The sequence spans 114 residues: Hydrogenase maturation factor HypA (114 aa).

Histidine 2 provides a ligand contact to Ni(2+). Cysteine 70, cysteine 73, cysteine 86, and cysteine 89 together coordinate Zn(2+).

Belongs to the HypA/HybF family.

In terms of biological role, involved in the maturation of [NiFe] hydrogenases. Required for nickel insertion into the metal center of the hydrogenase. The protein is Hydrogenase maturation factor HypA of Trichodesmium erythraeum (strain IMS101).